The primary structure comprises 419 residues: Monooxygenase CTB7 (419 aa).

Belongs to the aromatic-ring hydroxylase family. KMO subfamily.

It functions in the pathway mycotoxin biosynthesis. Its function is as follows. Monooxygenase; part of the gene cluster that mediates the biosynthesis of cercosporin, a light-activated, non-host-selective toxin. The perylenequinone chromophore of cercosporin absorbs light energy to attain an electronically-activated triplet state and produces active oxygen species such as the hydroxyl radical, superoxide, hydrogen peroxide or singlet oxygen upon reaction with oxygen molecules. These reactive oxygen species cause damage to various cellular components including lipids, proteins and nucleic acids. The first step of cercosporin biosynthesis is performed by the polyketide synthase CTB1 which catalyzes the formation of nor-toralactone. The starter unit acyltransferase (SAT) domain of CTB1 initiates polyketide extension by the selective utilization of acetyl-CoA, which is elongated to the heptaketide in the beta-ketoacyl synthase (KS) domain by successive condensations with six malonyl units introduced by the malonyl acyltransferase (MAT) domain. The product template (PT) domain catalyzes C4-C9 and C2-C11 aldol cyclizations and dehydrations to a trihydroxynaphthalene, which is thought to be delivered to the thioesterase (TE) domain for product release. The bifunctional enzyme CTB3 then methylates nor-toralactone to toralactone before conducting an unusual oxidative aromatic ring opening. The O-methyltransferase CTB2 further methylates the nascent OH-6 of the CBT3 product, blocking further oxidation at this site before the reductase CTB6 reduces the 2-oxopropyl ketone at position C7, giving naphthalene. The FAD-dependent monooxygenase CTB5 in concert with the multicopper oxidase CTB12 are responsible for homodimerization of naphthalene with CTB7 installing the dioxepine moiety, finally producing cercosporin. The fasciclin domain-containing protein CTB11 might act with CTB5 and CTB12 whereas the roles of CTB9 and CTB10 have still to be elucidated. This Cercospora beticola (Sugarbeet leaf spot fungus) protein is Monooxygenase CTB7.